Consider the following 442-residue polypeptide: UPF0597 protein HRM2_02820 (442 aa).

This sequence belongs to the UPF0597 family.

This Desulforapulum autotrophicum (strain ATCC 43914 / DSM 3382 / VKM B-1955 / HRM2) (Desulfobacterium autotrophicum) protein is UPF0597 protein HRM2_02820.